The following is a 318-amino-acid chain: 1-aminocyclopropane-1-carboxylate oxidase 1 (318 aa).

The region spanning 153 to 254 (PTFGTKVSNY…RMSIASFYNP (102 aa)) is the Fe2OG dioxygenase domain. The Fe cation site is built by His-177, Asp-179, and His-234.

The protein belongs to the iron/ascorbate-dependent oxidoreductase family. The cofactor is Fe cation. In terms of tissue distribution, fruit.

It carries out the reaction 1-aminocyclopropane-1-carboxylate + L-ascorbate + O2 = ethene + L-dehydroascorbate + hydrogen cyanide + CO2 + 2 H2O. The protein operates within alkene biosynthesis; ethylene biosynthesis via S-adenosyl-L-methionine; ethylene from S-adenosyl-L-methionine: step 2/2. The sequence is that of 1-aminocyclopropane-1-carboxylate oxidase 1 (ACO1) from Cucumis melo (Muskmelon).